A 629-amino-acid polypeptide reads, in one-letter code: MPEAVAAAVSPAAAAATAMCAEHREKLEHIERVTRNAGQEQRRVLEEILAQNAQAEYLRRLGVPGDAPGADEAFRRLAPLVTYEDILPDVLRIANGDTSPILSGKPVSEFLTSSGTSGGERKLMPTIEEEMERRSGLYSLLMPVMSRQVPGLDKGKAMYLYFVKSEWRTPGGLPARPVLTSFYRSRYFLERPHDPYTVYTSPDEAVLCEDAYQSMYAQLICGLVHRADVLRVGAVFASGFLRAIRFLEKHWPSLCRDIRAGELDGGVTDPAVRGAVGRVLRGADPALADAIEAECARPSWQGIIRRVWPSTKYIDVIVTGAMAQYIPTLEFYGGGLPLACTMYASSECYFGLNLNPMCKPSEVAYTLIPTMCYFEFLPVNSGANDVAAPEPDHRGLVDLVDVKLGHEYELVVTTYSGLYRYRVGDVLRVAGFKNAAPMFAFVRRKNVALSIDSDKTDEAELHAAVTEAVQHLAPFGASLVEYTSYADTATTIPGHYVLFWELRSPAGGTPVPASVFEDCCLAVEEGLNSVYRQCRAADRSIGPLEIRVVADGTFDKLMDYALSRGASINQYKAPRCVRPGPVVELLDGRVQATYFSPKCPKWCAGGNKQWISSGAAAKKTTTTCDSLAV.

It belongs to the IAA-amido conjugating enzyme family. In terms of tissue distribution, expressed in flowers.

Its function is as follows. May catalyze the synthesis of indole-3-acetic acid (IAA)-amino acid conjugates, providing a mechanism for the plant to cope with the presence of excess auxin. The polypeptide is Probable indole-3-acetic acid-amido synthetase GH3.4 (GH3.4) (Oryza sativa subsp. japonica (Rice)).